Consider the following 163-residue polypeptide: SKP1-like protein 3 (163 aa).

Residues 105–163 (LRAANYLNISGLLDLTCKAVADQMRGKTPAQMREHFNIKNDYTPEEEAEVRNENRWAFE) are interaction with the F-box domain of F-box proteins.

It belongs to the SKP1 family. As to quaternary structure, part of a SCF (SKP1-cullin-F-box) protein ligase complex. Interacts with ADO3/FKF1 and At3g61590. Highly expressed in siliques.

It localises to the nucleus. It functions in the pathway protein modification; protein ubiquitination. In terms of biological role, involved in ubiquitination and subsequent proteasomal degradation of target proteins. Together with CUL1, RBX1 and a F-box protein, it forms a SCF E3 ubiquitin ligase complex. The functional specificity of this complex depends on the type of F-box protein. In the SCF complex, it serves as an adapter that links the F-box protein to CUL1. This Arabidopsis thaliana (Mouse-ear cress) protein is SKP1-like protein 3 (ASK3).